The primary structure comprises 447 residues: Acyl-lipid (7-3)-desaturase (447 aa).

A Cytochrome b5 heme-binding domain is found at Leu36–Ala94. Positions 53 and 76 each coordinate heme. The next 3 helical transmembrane spans lie at Gly123–Leu143, Leu154–Asp174, and Ser185–Leu205. The Histidine box-1 motif lies at His173–His177. Positions His208 to His213 match the Histidine box-2 motif. A run of 3 helical transmembrane segments spans residues Trp244–Leu264, Leu286–Leu306, and Ala315–Ile335. The Histidine box-3 signature appears at Gln386 to His390.

Belongs to the fatty acid desaturase type 1 family. It depends on Fe(2+) as a cofactor.

It localises to the membrane. The catalysed reaction is a (7Z,10Z,13Z,16Z,19Z)-docosapentaenoyl-containing glycerolipid + 2 Fe(II)-[cytochrome b5] + O2 + 2 H(+) = a (4Z,7Z,10Z,13Z,16Z,19Z)-docosahexaenoyl-containing glycerolipid + 2 Fe(III)-[cytochrome b5] + 2 H2O. The enzyme catalyses a (7Z,10Z,13Z,16Z)-docosatetraenoyl-containing glycerolipid + 2 Fe(II)-[cytochrome b5] + O2 + 2 H(+) = a (4Z,7Z,10Z,13Z,16Z)-docosapentaenoyl-containing glycerolipid + 2 Fe(III)-[cytochrome b5] + 2 H2O. Fatty acid desaturase that introduces a cis double bond at the 4-position in 22-carbon polyunsaturated fatty acids that contain a Delta(7) double bond, resulting in the production of delta-4 desaturated fatty acid docosahexanoic acid (DHA). The chain is Acyl-lipid (7-3)-desaturase from Rebecca salina (Marine microalga).